Here is a 236-residue protein sequence, read N- to C-terminus: tRNA1(Val) (adenine(37)-N6)-methyltransferase (236 aa).

It belongs to the methyltransferase superfamily. tRNA (adenine-N(6)-)-methyltransferase family.

Its subcellular location is the cytoplasm. It catalyses the reaction adenosine(37) in tRNA1(Val) + S-adenosyl-L-methionine = N(6)-methyladenosine(37) in tRNA1(Val) + S-adenosyl-L-homocysteine + H(+). Functionally, specifically methylates the adenine in position 37 of tRNA(1)(Val) (anticodon cmo5UAC). The protein is tRNA1(Val) (adenine(37)-N6)-methyltransferase of Actinobacillus pleuropneumoniae serotype 5b (strain L20).